The chain runs to 166 residues: Endoribonuclease YbeY (166 aa).

Zn(2+) is bound by residues H132, H136, and H142.

Belongs to the endoribonuclease YbeY family. The cofactor is Zn(2+).

It is found in the cytoplasm. In terms of biological role, single strand-specific metallo-endoribonuclease involved in late-stage 70S ribosome quality control and in maturation of the 3' terminus of the 16S rRNA. The polypeptide is Endoribonuclease YbeY (Clostridium botulinum (strain Loch Maree / Type A3)).